The following is a 714-amino-acid chain: Interferon-induced GTP-binding protein Mx2 (714 aa).

The disordered stretch occupies residues 1–89 (MSMSYRALKF…QRSKGSENNL (89 aa)). Polar residues-rich tracts occupy residues 61 to 70 (NNFNQLNLDP) and 79 to 88 (QQRSKGSENN). A Dynamin-type G domain is found at 115-386 (DLALPAIAVI…LIWHINKSLP (272 aa)). Residues 125 to 132 (GDQSSGKS) are G1 motif. 125–132 (GDQSSGKS) provides a ligand contact to GTP. A G2 motif region spans residues 150–152 (ITR). Positions 224-227 (DLPG) are G3 motif. Residues 224 to 228 (DLPGI) and 293 to 296 (TKPD) contribute to the GTP site. Residues 293–296 (TKPD) are G4 motif. Residues 325-328 (KCRG) form a G5 motif region. Positions 622-713 (IVEIGVHLNA…ALYEFPHFKS (92 aa)) constitute a GED domain.

It belongs to the TRAFAC class dynamin-like GTPase superfamily. Dynamin/Fzo/YdjA family.

It localises to the cytoplasm. Its subcellular location is the nucleus. Interferon-induced dynamin-like GTPase with antiviral activity. The sequence is that of Interferon-induced GTP-binding protein Mx2 (MX2) from Ovis aries (Sheep).